The primary structure comprises 102 residues: Monothiol glutaredoxin-S4 (102 aa).

One can recognise a Glutaredoxin domain in the interval 1–101 (MDKLQKMISE…PMLKRVGALW (101 aa)). Cys-21 contributes to the [2Fe-2S] cluster binding site. The short motif at 99 to 102 (ALWL) is the Responsive for interaction with TGA factors element.

Belongs to the glutaredoxin family. CC-type subfamily.

Its subcellular location is the cytoplasm. It localises to the nucleus. In terms of biological role, may only reduce GSH-thiol disulfides, but not protein disulfides. The polypeptide is Monothiol glutaredoxin-S4 (GRXS4) (Arabidopsis thaliana (Mouse-ear cress)).